A 600-amino-acid chain; its full sequence is Prostaglandin G/H synthase 1 (600 aa).

The signal sequence occupies residues 1–24 (MSRQGISLRFPLLLLLLSPSPVLP). Residues 32-70 (PVNPCCYYPCQHQGICVRFGLDRYQCDCTRTGYYGPNCT) enclose the EGF-like domain. 4 cysteine pairs are disulfide-bonded: C36/C47, C37/C159, C41/C57, and C59/C69. N-linked (GlcNAc...) asparagine glycans are attached at residues N68, N104, and N144. The Proton acceptor role is filled by H207. Y385 acts as the For cyclooxygenase activity in catalysis. H388 is a binding site for heme b. The N-linked (GlcNAc...) asparagine glycan is linked to N410. Cysteines 569 and 575 form a disulfide.

The protein belongs to the prostaglandin G/H synthase family. In terms of assembly, homodimer. Heme b is required as a cofactor.

The protein localises to the microsome membrane. It is found in the endoplasmic reticulum membrane. It carries out the reaction (5Z,8Z,11Z,14Z)-eicosatetraenoate + AH2 + 2 O2 = prostaglandin H2 + A + H2O. The catalysed reaction is (5Z,8Z,11Z,14Z)-eicosatetraenoate + 2 O2 = prostaglandin G2. The enzyme catalyses prostaglandin G2 + AH2 = prostaglandin H2 + A + H2O. It catalyses the reaction (9Z,12Z)-octadecadienoate + AH2 + O2 = (9R)-hydroxy-(10E,12Z)-octadecadienoate + A + H2O. It carries out the reaction (9Z,12Z)-octadecadienoate + AH2 + O2 = (9S)-hydroxy-(10E,12Z)-octadecadienoate + A + H2O. The catalysed reaction is (9Z,12Z)-octadecadienoate + AH2 + O2 = (13S)-hydroxy-(9Z,11E)-octadecadienoate + A + H2O. The enzyme catalyses (9Z,12Z)-octadecadienoate + AH2 + O2 = (13R)-hydroxy-(9Z,11E)-octadecadienoate + A + H2O. The protein operates within lipid metabolism; prostaglandin biosynthesis. The cyclooxygenase activity is inhibited by nonsteroidal anti-inflammatory drugs (NSAIDs) including ibuprofen, flurbiprofen, ketoprofen, naproxen, flurbiprofen, anirolac, fenclofenac and diclofenac. Its function is as follows. Dual cyclooxygenase and peroxidase that plays an important role in the biosynthesis pathway of prostanoids, a class of C20 oxylipins mainly derived from arachidonate ((5Z,8Z,11Z,14Z)-eicosatetraenoate, AA, C20:4(n-6)), with a particular role in the inflammatory response. The cyclooxygenase activity oxygenates AA to the hydroperoxy endoperoxide prostaglandin G2 (PGG2), and the peroxidase activity reduces PGG2 to the hydroxy endoperoxide prostaglandin H2 (PGH2), the precursor of all 2-series prostaglandins and thromboxanes. This complex transformation is initiated by abstraction of hydrogen at carbon 13 (with S-stereochemistry), followed by insertion of molecular O2 to form the endoperoxide bridge between carbon 9 and 11 that defines prostaglandins. The insertion of a second molecule of O2 (bis-oxygenase activity) yields a hydroperoxy group in PGG2 that is then reduced to PGH2 by two electrons. Involved in the constitutive production of prostanoids in particular in the stomach and platelets. In gastric epithelial cells, it is a key step in the generation of prostaglandins, such as prostaglandin E2 (PGE2), which plays an important role in cytoprotection. In platelets, it is involved in the generation of thromboxane A2 (TXA2), which promotes platelet activation and aggregation, vasoconstriction and proliferation of vascular smooth muscle cells. Can also use linoleate (LA, (9Z,12Z)-octadecadienoate, C18:2(n-6)) as substrate and produce hydroxyoctadecadienoates (HODEs) in a regio- and stereospecific manner, being (9R)-HODE ((9R)-hydroxy-(10E,12Z)-octadecadienoate) and (13S)-HODE ((13S)-hydroxy-(9Z,11E)-octadecadienoate) its major products. This Bos taurus (Bovine) protein is Prostaglandin G/H synthase 1 (PTGS1).